The chain runs to 453 residues: Glutamyl-tRNA reductase (453 aa).

Substrate contacts are provided by residues 50-53, S110, 115-117, and Q121; these read TCNR and EPQ. The active-site Nucleophile is C51. Position 190-195 (190-195) interacts with NADP(+); it reads GAGEMA. The span at 423–436 shows a compositional bias: basic and acidic residues; it reads REKVPTDAHADRKP. The tract at residues 423 to 453 is disordered; the sequence is REKVPTDAHADRKPPNFAETSDDFDVTDASE. Over residues 442–453 the composition is skewed to acidic residues; sequence TSDDFDVTDASE.

The protein belongs to the glutamyl-tRNA reductase family. Homodimer.

The enzyme catalyses (S)-4-amino-5-oxopentanoate + tRNA(Glu) + NADP(+) = L-glutamyl-tRNA(Glu) + NADPH + H(+). Its pathway is porphyrin-containing compound metabolism; protoporphyrin-IX biosynthesis; 5-aminolevulinate from L-glutamyl-tRNA(Glu): step 1/2. Catalyzes the NADPH-dependent reduction of glutamyl-tRNA(Glu) to glutamate 1-semialdehyde (GSA). This Solidesulfovibrio magneticus (strain ATCC 700980 / DSM 13731 / RS-1) (Desulfovibrio magneticus) protein is Glutamyl-tRNA reductase.